Here is a 289-residue protein sequence, read N- to C-terminus: MPPNITALNTTRARTYVFRLPLFTRVVIIAIVGFWLAGLQSIVDIQQWGALIPDEMGLATLYRMNTFPFIHLNIFHAVMNILALTPLMERFEAEYGTLNCLALFFGPLTTIPAFLYIGLEKFVFGNNVAVMGASMWVFLLLGVEAVKTYKVNPNFVIGTYSIPTWTTPIGVLFAMAVLVPSSSFWGHAAGLVIGYGGMFSSTLNKKEKRQCADVKGVAGLGYVKFLAPPEKILRWIEGKLNLLGRLPHYVSIDQKTYGRFGVLPSNNTPAAASPGVALGLVGSTQRLGP.

The next 6 membrane-spanning stretches (helical) occupy residues 26–46 (VVII…VDIQ), 67–87 (FPFI…LTPL), 100–120 (CLAL…IGLE), 122–142 (FVFG…LLLG), 157–179 (IGTY…AVLV), and 184–203 (FWGH…SSTL). Ser134 (nucleophile) is an active-site residue. His187 is an active-site residue.

This sequence belongs to the peptidase S54 family.

The protein localises to the golgi apparatus membrane. The protein resides in the golgi apparatus. Its subcellular location is the cis-Golgi network membrane. The catalysed reaction is Cleaves type-1 transmembrane domains using a catalytic dyad composed of serine and histidine that are contributed by different transmembrane domains.. Probable rhomboid-type serine protease that catalyzes intramembrane proteolysis. This chain is Rhomboid-type serine protease 2 (RBD2), found in Podospora anserina (Pleurage anserina).